The sequence spans 569 residues: Proline--tRNA ligase (569 aa).

The protein belongs to the class-II aminoacyl-tRNA synthetase family. ProS type 1 subfamily. As to quaternary structure, homodimer.

It is found in the cytoplasm. The catalysed reaction is tRNA(Pro) + L-proline + ATP = L-prolyl-tRNA(Pro) + AMP + diphosphate. Functionally, catalyzes the attachment of proline to tRNA(Pro) in a two-step reaction: proline is first activated by ATP to form Pro-AMP and then transferred to the acceptor end of tRNA(Pro). As ProRS can inadvertently accommodate and process non-cognate amino acids such as alanine and cysteine, to avoid such errors it has two additional distinct editing activities against alanine. One activity is designated as 'pretransfer' editing and involves the tRNA(Pro)-independent hydrolysis of activated Ala-AMP. The other activity is designated 'posttransfer' editing and involves deacylation of mischarged Ala-tRNA(Pro). The misacylated Cys-tRNA(Pro) is not edited by ProRS. The sequence is that of Proline--tRNA ligase from Dehalococcoides mccartyi (strain ATCC BAA-2100 / JCM 16839 / KCTC 5957 / BAV1).